The following is a 1657-amino-acid chain: MDSKKRSSTEAEGSKERGLVHIWQAGSFPITPERLPGWGGKTVLQAALGVKHGVLLTEDGEVYSFGTLPWRSGPVEICPSSPILENALVGQYVITVATGSFHSGAVTDNGVAYMWGENSAGQCAVANQQYVPEPNPVSIADSEASPLLAVRILQLACGEEHTLALSISREIWAWGTGCQLGLITTAFPVTKPQKVEHLAGRVVLQVACGAFHSLALVQCLPSQDLKPVPERCNQCSQLLITMTDKEDHVIISDSHCCPLGVTLTESQAENHASTALSPSTETLDRQEEVFENTLVANDQSVATELNAVSAQITSSDAMSSQQNVMGTTEISSARNIPSYPDTQAVNEYLRKLSDHSVREDSEHGEKPVPSQPLLEEAIPNLHSPPTTSTSALNSLVVSCASAVGVRVAATYEAGALSLKKVMNFYSTTPCETGAQAGSSAIGPEGLKDSREEQVKQESMQGKKSSSLVDIREEETEGGSRRLSLPGLLSQVSPRLLRKAARVKTRTVVLTPTYSGEADALLPSLRTEVWTWGKGKEGQLGHGDVLPRLQPLCVKCLDGKEVIHLEAGGYHSLALTAKSQVYSWGSNTFGQLGHSDFPTTVPRLAKISSENGVWSIAAGRDYSLFLVDTEDFQPGLYYSGRQDPTEGDNLPENHSGSKTPVLLSCSKLGYISRVTAGKDSYLALVDKNIMGYIASLHELATTERRFYSKLSDIKSQILRPLLSLENLGTTTTVQLLQEVASRFSKLCYLIGQHGASLSSFLHGVKEARSLVILKHSSLFLDSYTEYCTSITNFLVMGGFQLLAKPAIDFLNKNQELLQDLSEVNDENTQLMEILNTLFFLPIRRLHNYAKVLLKLATCFEVASPEYQKLQDSSSCYECLALHLGRKRKEAEYTLGFWKTFPGKMTDSLRKPERRLLCESSNRALSLQHAGRFSVNWFILFNDALVHAQFSTHHVFPLATLWAEPLSEEAGGVNGLKITTPEEQFTLISSTPQEKTKWLRAISQAVDQALRGMSDLPPYGSGSSVQRQEPPISRSAKYTFYKDPRLKDATYDGRWLSGKPHGRGVLKWPDGKMYSGMFRNGLEDGYGEYRIPNKAMNKEDHYVGHWKEGKMCGQGVYSYASGEVFEGCFQDNMRHGHGLLRSGKLTSSSPSMFIGQWVMDKKAGYGVFDDITRGEKYMGMWQDDVCQGNGVVVTQFGLYYEGNFHLNKMMGNGVLLSEDDTIYEGEFSDDWTLSGKGTLTMPNGDYIEGYFSGEWGSGIKITGTYFKPSLYESDKDRPKVFRKLGNLAVPADEKWKAVFDECWRQLGCEGPGQGEVWKAWDNIAVALTTSRRQHRDSPEILSRSQTQTLESLEFIPQHVGAFSVEKYDDIRKYLIKACDTPLHPLGRLVETLVAVYRMTYVGVGANRRLLQEAVKEIKSYLKRIFQLVRFLFPELPEEGSTIPLSAPLPTERKSFCTGKSDSRSESPEPGYVVTSSGLLLPVLLPRLYPPLFMLYALDNDREEDIYWECVLRLNKQPDIALLGFLGVQRKFWPATLSILGESKKVLPTTKDACFASAVECLQQISTTFTPSDKLKVIQQTFEEISQSVLASLHEDFLWSMDDLFPVFLYVVLRARIRNLGSEVHLIEDLMDPYLQHGEQGIMFTTLKACYYQIQREKLN.

3 RCC1 repeats span residues 59-108, 109-167, and 169-218; these read DGEV…AVTD, NGVA…ALSI, and REIW…ALVQ. A disordered region spans residues 432-480; the sequence is TGAQAGSSAIGPEGLKDSREEQVKQESMQGKKSSSLVDIREEETEGGSR. A compositionally biased stretch (basic and acidic residues) spans 445–455; that stretch reads GLKDSREEQVK. Polar residues predominate over residues 456–467; sequence QESMQGKKSSSL. Residues Ser465, Ser466, Ser483, and Ser492 each carry the phosphoserine modification. A Phosphothreonine modification is found at Thr510. 2 RCC1 repeats span residues 525–576 and 578–627; these read RTEV…ALTA and SQVY…FLVD. Residue Lys533 is modified to N6-acetyllysine. The 196-residue stretch at 690–885 folds into the DH domain; the sequence is GYIASLHELA…ECLALHLGRK (196 aa). One can recognise a PH domain in the interval 901–1007; the sequence is GKMTDSLRKP…RAISQAVDQA (107 aa). MORN repeat units follow at residues 1049-1071, 1072-1094, 1100-1122, 1123-1145, 1151-1173, 1175-1197, 1198-1220, and 1221-1244; these read YDGR…DGKM, YSGM…NKAM, YVGH…SGEV, FEGC…KLTS, FIGQ…TRGE, YMGM…FGLY, YEGN…DDTI, and YEGE…NGDY. Ser1335 is subject to Phosphoserine. Positions 1513–1657 constitute a VPS9 domain; the sequence is KQPDIALLGF…YYQIQREKLN (145 aa).

In terms of assembly, forms a heteromeric complex with ALS2CL. Interacts with ALS2CL.

Its function is as follows. May act as a GTPase regulator. Controls survival and growth of spinal motoneurons. This is Alsin (ALS2) from Homo sapiens (Human).